The sequence spans 239 residues: Peptidase E (239 aa).

Residues Ser122, Asp137, and His159 each act as charge relay system in the active site.

Belongs to the peptidase S51 family.

It is found in the cytoplasm. The enzyme catalyses Dipeptidase E catalyzes the hydrolysis of dipeptides Asp-|-Xaa. It does not act on peptides with N-terminal Glu, Asn or Gln, nor does it cleave isoaspartyl peptides.. Functionally, hydrolyzes dipeptides containing N-terminal aspartate residues. May play a role in allowing the cell to use peptide aspartate to spare carbon otherwise required for the synthesis of the aspartate family of amino acids. This chain is Peptidase E, found in Shewanella baltica (strain OS195).